The primary structure comprises 334 residues: D-fructose 1,6-bisphosphatase class 2/sedoheptulose 1,7-bisphosphatase (334 aa).

D33, E57, D85, and E88 together coordinate Mn(2+). Substrate contacts are provided by residues 88-90 (EGT), Y119, 164-166 (RAR), and 186-188 (DGD). E213 is a Mn(2+) binding site.

Belongs to the FBPase class 2 family. As to quaternary structure, homotetramer. Mn(2+) serves as cofactor.

The catalysed reaction is beta-D-fructose 1,6-bisphosphate + H2O = beta-D-fructose 6-phosphate + phosphate. The enzyme catalyses D-sedoheptulose 1,7-bisphosphate + H2O = D-sedoheptulose 7-phosphate + phosphate. Its pathway is carbohydrate biosynthesis; Calvin cycle. In terms of biological role, catalyzes the hydrolysis of fructose 1,6-bisphosphate (Fru 1,6-P2) and sedoheptulose 1,7-bisphosphate (Sed 1,7-P2) to fructose 6-phosphate and sedoheptulose 7-phosphate, respectively. This chain is D-fructose 1,6-bisphosphatase class 2/sedoheptulose 1,7-bisphosphatase, found in Prochlorococcus marinus (strain NATL1A).